The sequence spans 622 residues: 1,4-alpha-glucan branching enzyme GlgB (622 aa).

The Nucleophile role is filled by Asp306. The Proton donor role is filled by Glu358. A disordered region spans residues 581 to 606 (YGGSNVGNRGAVHSDPVEKHGHSHSL).

This sequence belongs to the glycosyl hydrolase 13 family. GlgB subfamily. Monomer.

It carries out the reaction Transfers a segment of a (1-&gt;4)-alpha-D-glucan chain to a primary hydroxy group in a similar glucan chain.. It participates in glycan biosynthesis; glycogen biosynthesis. In terms of biological role, catalyzes the formation of the alpha-1,6-glucosidic linkages in glycogen by scission of a 1,4-alpha-linked oligosaccharide from growing alpha-1,4-glucan chains and the subsequent attachment of the oligosaccharide to the alpha-1,6 position. This Salinibacter ruber (strain DSM 13855 / M31) protein is 1,4-alpha-glucan branching enzyme GlgB.